The chain runs to 336 residues: tRNA N6-adenosine threonylcarbamoyltransferase (336 aa).

Residues His114 and His118 each contribute to the Fe cation site. Residues 136–140 (LVSGG), Asp169, Gly182, Asp186, and Asn275 each bind substrate. Asp301 contacts Fe cation.

It belongs to the KAE1 / TsaD family. It depends on Fe(2+) as a cofactor.

The protein resides in the cytoplasm. It carries out the reaction L-threonylcarbamoyladenylate + adenosine(37) in tRNA = N(6)-L-threonylcarbamoyladenosine(37) in tRNA + AMP + H(+). In terms of biological role, required for the formation of a threonylcarbamoyl group on adenosine at position 37 (t(6)A37) in tRNAs that read codons beginning with adenine. Is involved in the transfer of the threonylcarbamoyl moiety of threonylcarbamoyl-AMP (TC-AMP) to the N6 group of A37, together with TsaE and TsaB. TsaD likely plays a direct catalytic role in this reaction. The chain is tRNA N6-adenosine threonylcarbamoyltransferase from Streptococcus pneumoniae (strain Taiwan19F-14).